A 119-amino-acid chain; its full sequence is MARSVVVALLVLLSLSGLEAIQHAPKIQVYSRHPAENGKPNFLNCYVSGFHPSDIEVDLLKNGKKIEKVEHSDLSFSKDWSFYLLYYTEFTPNEKDEYACRVSHVTFPTPKTVKWDRTM.

Positions 1–20 are cleaved as a signal peptide; that stretch reads MARSVVVALLVLLSLSGLEA. One can recognise an Ig-like C1-type domain in the interval 25-114; the sequence is PKIQVYSRHP…VTFPTPKTVK (90 aa). A disulfide bridge links Cys45 with Cys100.

This sequence belongs to the beta-2-microglobulin family. As to quaternary structure, heterodimer of an alpha chain and a beta chain. Beta-2-microglobulin is the beta-chain of major histocompatibility complex class I molecules.

The protein localises to the secreted. Functionally, component of the class I major histocompatibility complex (MHC). Involved in the presentation of peptide antigens to the immune system. The chain is Beta-2-microglobulin (B2M) from Lagothrix lagotricha (Brown woolly monkey).